The primary structure comprises 94 residues: Co-chaperonin GroES (94 aa).

It belongs to the GroES chaperonin family. In terms of assembly, heptamer of 7 subunits arranged in a ring. Interacts with the chaperonin GroEL.

The protein resides in the cytoplasm. Together with the chaperonin GroEL, plays an essential role in assisting protein folding. The GroEL-GroES system forms a nano-cage that allows encapsulation of the non-native substrate proteins and provides a physical environment optimized to promote and accelerate protein folding. GroES binds to the apical surface of the GroEL ring, thereby capping the opening of the GroEL channel. The sequence is that of Co-chaperonin GroES from Bacillus licheniformis (strain ATCC 14580 / DSM 13 / JCM 2505 / CCUG 7422 / NBRC 12200 / NCIMB 9375 / NCTC 10341 / NRRL NRS-1264 / Gibson 46).